The following is a 267-amino-acid chain: DNA repair protein RecO (267 aa).

It belongs to the RecO family.

Involved in DNA repair and RecF pathway recombination. In Prochlorococcus marinus (strain MIT 9313), this protein is DNA repair protein RecO.